The following is a 72-amino-acid chain: SPbeta prophage-derived uncharacterized protein YorV (72 aa).

The protein is SPbeta prophage-derived uncharacterized protein YorV (yorV) of Bacillus subtilis (strain 168).